The following is a 376-amino-acid chain: DNA replication and repair protein RecF (376 aa).

30-37 lines the ATP pocket; that stretch reads GNNAQGKS.

Belongs to the RecF family.

The protein resides in the cytoplasm. Functionally, the RecF protein is involved in DNA metabolism; it is required for DNA replication and normal SOS inducibility. RecF binds preferentially to single-stranded, linear DNA. It also seems to bind ATP. The protein is DNA replication and repair protein RecF of Nostoc sp. (strain PCC 7120 / SAG 25.82 / UTEX 2576).